A 370-amino-acid polypeptide reads, in one-letter code: Histidinol-phosphate aminotransferase 1 (370 aa).

At Lys229 the chain carries N6-(pyridoxal phosphate)lysine.

The protein belongs to the class-II pyridoxal-phosphate-dependent aminotransferase family. Histidinol-phosphate aminotransferase subfamily. In terms of assembly, homodimer. The cofactor is pyridoxal 5'-phosphate.

The catalysed reaction is L-histidinol phosphate + 2-oxoglutarate = 3-(imidazol-4-yl)-2-oxopropyl phosphate + L-glutamate. Its pathway is amino-acid biosynthesis; L-histidine biosynthesis; L-histidine from 5-phospho-alpha-D-ribose 1-diphosphate: step 7/9. The chain is Histidinol-phosphate aminotransferase 1 from Nitrosococcus oceani (strain ATCC 19707 / BCRC 17464 / JCM 30415 / NCIMB 11848 / C-107).